Here is a 231-residue protein sequence, read N- to C-terminus: Quercetin 2,3-dioxygenase (231 aa).

Residues histidine 57, histidine 59, histidine 101, and glutamate 103 each contribute to the a divalent metal cation site.

It belongs to the pirin family. It depends on Zn(2+) as a cofactor. The cofactor is Co(2+). Requires Fe(2+) as cofactor.

It carries out the reaction quercetin + O2 = 2-(3,4-dihydroxybenzoyloxy)-4,6-dihydroxybenzoate + CO. It participates in flavonoid metabolism; quercetin degradation. Its activity is regulated as follows. Inhibited by kojic acid, sodium diethyldithiocarbamate and 1,10-phenanthroline monohydrochloride. Functionally, has quercetin 2,3-dioxygenase activity in vitro. Its physiological role is unknown; however, may provide a mechanism that would avoid inhibition of key cellular proteins, such as DNA gyrase, by quercetin. In Escherichia coli (strain K12), this protein is Quercetin 2,3-dioxygenase (yhhW).